The chain runs to 175 residues: 3-hydroxydecanoyl-[acyl-carrier-protein] dehydratase (175 aa).

His-71 is an active-site residue.

Belongs to the thioester dehydratase family. FabA subfamily. Homodimer.

The protein resides in the cytoplasm. The catalysed reaction is a (3R)-hydroxyacyl-[ACP] = a (2E)-enoyl-[ACP] + H2O. The enzyme catalyses (3R)-hydroxydecanoyl-[ACP] = (2E)-decenoyl-[ACP] + H2O. It catalyses the reaction (2E)-decenoyl-[ACP] = (3Z)-decenoyl-[ACP]. It participates in lipid metabolism; fatty acid biosynthesis. Functionally, necessary for the introduction of cis unsaturation into fatty acids. Catalyzes the dehydration of (3R)-3-hydroxydecanoyl-ACP to E-(2)-decenoyl-ACP and then its isomerization to Z-(3)-decenoyl-ACP. Can catalyze the dehydratase reaction for beta-hydroxyacyl-ACPs with saturated chain lengths up to 16:0, being most active on intermediate chain length. The chain is 3-hydroxydecanoyl-[acyl-carrier-protein] dehydratase from Rhodopseudomonas palustris (strain ATCC BAA-98 / CGA009).